The chain runs to 458 residues: Argininosuccinate lyase (458 aa).

It belongs to the lyase 1 family. Argininosuccinate lyase subfamily.

It localises to the cytoplasm. The enzyme catalyses 2-(N(omega)-L-arginino)succinate = fumarate + L-arginine. The protein operates within amino-acid biosynthesis; L-arginine biosynthesis; L-arginine from L-ornithine and carbamoyl phosphate: step 3/3. The sequence is that of Argininosuccinate lyase from Salmonella paratyphi B (strain ATCC BAA-1250 / SPB7).